The following is a 761-amino-acid chain: Dipeptidyl-peptidase 4 (761 aa).

A signal peptide spans 1–15; the sequence is MTLSAWIILVTLAMA. Active-site charge relay system residues include serine 622, aspartate 706, and histidine 738.

The protein belongs to the peptidase S9C family.

It is found in the membrane. Functionally, may be involved in metabolism of dipeptides or may affect host defense mechanisms. This chain is Dipeptidyl-peptidase 4 (DPP), found in Giardia intestinalis (Giardia lamblia).